Here is a 617-residue protein sequence, read N- to C-terminus: MLVPLAKLSCLAYQCFHALKIKKNYLPLCATRWSSTSTVPRITTHYTIYPRDKDKRWEGVNMERFAEEADVVIVGAGPAGLSAAVRLKQLAVAHEKDIRVCLVEKAAQIGAHTLSGACLDPGAFKELFPDWKEKGAPLNTPVTEDRFGILTEKYRIPVPILPGLPMNNHGNYIVRLGHLVSWMGEQAEALGVEVYPGYAAAEVLFHDDGSVKGIATNDVGIQKDGAPKATFERGLELHAKVTIFAEGCHGHLAKQLYKKFDLRANCEPQTYGIGLKELWVIDEKNWKPGRVDHTVGWPLDRHTYGGSFLYHLNEGEPLVALGLVVGLDYQNPYLSPFREFQRWKHHPSIRPTLEGGKRIAYGARALNEGGFQSIPKLTFPGGLLIGCSPGFMNVPKIKGTHTAMKSGILAAESIFNQLTSENLQSKTIGLHVTEYEDNLKNSWVWKELYSVRNIRPSCHGVLGVYGGMIYTGIFYWILRGMEPWTLKHKGSDFERLKPAKDCTPIEYPKPDGQISFDLLSSVALSGTNHEHDQPAHLTLRDDSIPVNRNLSIYDGPEQRFCPAGVYEFVPVEQGDGFRLQINAQNCVHCKTCDIKDPSQNINWVVPEGGGGPAYNGM.

A mitochondrion-targeting transit peptide spans 1–33 (MLVPLAKLSCLAYQCFHALKIKKNYLPLCATRW). Residue 71–85 (VVIVGAGPAGLSAAV) participates in FAD binding. The residue at position 96 (Lys96) is an N6-acetyllysine. Residues 109–130 (IGAHTLSGACLDPGAFKELFPD) lie within the membrane without spanning it. 2 positions are modified to N6-acetyllysine: Lys132 and Lys223. A ubiquinone is bound by residues Gly305 and Gly306. Lys357 bears the N6-acetyllysine mark. An intramembrane segment occupies 428-447 (IGLHVTEYEDNLKNSWVWKE). The residue at position 551 (Ser551) is a Phosphoserine. 4 residues coordinate [4Fe-4S] cluster: Cys561, Cys586, Cys589, and Cys592. One can recognise a 4Fe-4S ferredoxin-type domain in the interval 577–606 (FRLQINAQNCVHCKTCDIKDPSQNINWVVP).

The protein belongs to the ETF-QO/FixC family. As to quaternary structure, monomer. [4Fe-4S] cluster is required as a cofactor. FAD serves as cofactor.

It is found in the mitochondrion inner membrane. The catalysed reaction is a ubiquinone + reduced [electron-transfer flavoprotein] = a ubiquinol + oxidized [electron-transfer flavoprotein] + H(+). Its function is as follows. Accepts electrons from ETF and reduces ubiquinone. In Homo sapiens (Human), this protein is Electron transfer flavoprotein-ubiquinone oxidoreductase, mitochondrial.